A 149-amino-acid polypeptide reads, in one-letter code: Calmodulin-1 (149 aa).

Alanine 2 is subject to N-acetylalanine. EF-hand domains follow at residues 8–43 (EQIA…LGQN), 44–79 (PTEA…KMKD), 81–116 (DSEE…LGEK), and 117–149 (LTDE…MTSK). Positions 21, 23, 25, 27, 32, 57, 59, 61, 63, 68, 94, 96, 98, and 105 each coordinate Ca(2+). Position 116 is an N6,N6,N6-trimethyllysine (lysine 116). Positions 130, 132, 134, 136, and 141 each coordinate Ca(2+).

Belongs to the calmodulin family.

Calmodulin mediates the control of a large number of enzymes, ion channels and other proteins by Ca(2+). Among the enzymes to be stimulated by the calmodulin-Ca(2+) complex are a number of protein kinases and phosphatases. This chain is Calmodulin-1, found in Branchiostoma floridae (Florida lancelet).